A 793-amino-acid chain; its full sequence is Nuclear cap-binding protein subunit 1 (793 aa).

Disordered regions lie at residues 1–30 and 668–692; these read MSRR…SEIE and LARQ…GPLE. Residues 30-242 enclose the MIF4G domain; that stretch reads EERLESLICR…CLWSQIQKLK (213 aa). The segment covering 683 to 692 has biased composition (basic and acidic residues); it reads SSDREDGPLE. The stretch at 686–716 forms a coiled coil; it reads REDGPLEEQIERLQEKVESAQSEQKNLFLVI.

It belongs to the NCBP1 family. As to quaternary structure, component of the nuclear cap-binding complex (CBC), a heterodimer composed of NCBP1/CBP80 and NCBP2/CBP20 that interacts with m7GpppG-capped RNA. Component of an alternative nuclear cap-binding complex (CBC) composed of NCBP1/CBP80 and NCBP3.

The protein localises to the nucleus. The protein resides in the cytoplasm. Its function is as follows. Component of the cap-binding complex (CBC), which binds cotranscriptionally to the 5'-cap of pre-mRNAs and is involved in various processes such as pre-mRNA splicing, translation regulation, nonsense-mediated mRNA decay, RNA-mediated gene silencing (RNAi) by microRNAs (miRNAs) and mRNA export. The CBC complex is involved in mRNA export from the nucleus, leading to the recruitment of the mRNA export machinery to the 5'-end of mRNA and to mRNA export in a 5' to 3' direction through the nuclear pore. The CBC complex is also involved in mediating U snRNA and intronless mRNAs export from the nucleus. The CBC complex is essential for a pioneer round of mRNA translation, before steady state translation when the CBC complex is replaced by cytoplasmic cap-binding protein eIF4E. The pioneer round of mRNA translation mediated by the CBC complex plays a central role in nonsense-mediated mRNA decay (NMD), NMD only taking place in mRNAs bound to the CBC complex, but not on eIF4E-bound mRNAs. The CBC complex enhances NMD in mRNAs containing at least one exon-junction complex (EJC), promoting the interaction between UPF1 and UPF2. The CBC complex is also involved in 'failsafe' NMD, which is independent of the EJC complex, while it does not participate in Staufen-mediated mRNA decay (SMD). During cell proliferation, the CBC complex is also involved in microRNAs (miRNAs) biogenesis via its interaction with SRRT/ARS2 and is required for miRNA-mediated RNA interference. The CBC complex also acts as a negative regulator of PARN, thereby acting as an inhibitor of mRNA deadenylation. In the CBC complex, NCBP1/CBP80 does not bind directly capped RNAs (m7GpppG-capped RNA) but is required to stabilize the movement of the N-terminal loop of NCBP2/CBP20 and lock the CBC into a high affinity cap-binding state with the cap structure. Associates with NCBP3 to form an alternative cap-binding complex (CBC) which plays a key role in mRNA export. The conventional CBC with NCBP2 binds both small nuclear RNA (snRNA) and messenger (mRNA) and is involved in their export from the nucleus whereas the alternative CBC with NCBP3 does not bind snRNA and associates only with mRNA thereby playing a role only in mRNA export. The sequence is that of Nuclear cap-binding protein subunit 1 (NCBP1) from Gallus gallus (Chicken).